A 155-amino-acid polypeptide reads, in one-letter code: Aspartate 1-decarboxylase (155 aa).

The active-site Schiff-base intermediate with substrate; via pyruvic acid is the Ser24. Ser24 bears the Pyruvic acid (Ser) mark. Residue Thr56 coordinates substrate. Tyr57 functions as the Proton donor in the catalytic mechanism. Residue 72–74 (GAA) coordinates substrate.

The protein belongs to the PanD family. As to quaternary structure, heterooctamer of four alpha and four beta subunits. Pyruvate serves as cofactor. Post-translationally, is synthesized initially as an inactive proenzyme, which is activated by self-cleavage at a specific serine bond to produce a beta-subunit with a hydroxyl group at its C-terminus and an alpha-subunit with a pyruvoyl group at its N-terminus.

It is found in the cytoplasm. It catalyses the reaction L-aspartate + H(+) = beta-alanine + CO2. The protein operates within cofactor biosynthesis; (R)-pantothenate biosynthesis; beta-alanine from L-aspartate: step 1/1. Catalyzes the pyruvoyl-dependent decarboxylation of aspartate to produce beta-alanine. In Methylocella silvestris (strain DSM 15510 / CIP 108128 / LMG 27833 / NCIMB 13906 / BL2), this protein is Aspartate 1-decarboxylase.